Here is a 502-residue protein sequence, read N- to C-terminus: Neuronal acetylcholine receptor subunit alpha-7 (502 aa).

The N-terminal stretch at 1–22 is a signal peptide; it reads MCGGRGGIWLALAAALLHVSLQ. At 23–233 the chain is on the extracellular side; sequence GEFQRRLYKE…VTMRRRTLYY (211 aa). Ca(2+) is bound by residues Arg42 and Val44. Asn46, Asn90, and Asn133 each carry an N-linked (GlcNAc...) asparagine glycan. A disulfide bond links Cys150 and Cys164. 2 residues coordinate Ca(2+): Ser172 and Tyr210. The cysteines at positions 212 and 213 are disulfide-linked. Helical transmembrane passes span 234-254, 262-282, and 295-315; these read GLNLLIPCVLISALALLVFLL, ISLGITVLLSLTVFMLLVAEI, and QYFASTMIIVGLSVVVTVIVL. The tract at residues 260–267 is essential for TMEM35A/NACHO-mediated proper subunit assembly and trafficking to cell membrane; that stretch reads EKISLGIT. Over 316–469 the chain is Cytoplasmic; the sequence is RYHHHDPDGG…WKFAACVVDR (154 aa). A helical membrane pass occupies residues 470 to 490; sequence LCLMAFSVFTIICTIGILMSA.

It belongs to the ligand-gated ion channel (TC 1.A.9) family. Acetylcholine receptor (TC 1.A.9.1) subfamily. Alpha-7/CHRNA7 sub-subfamily. As to quaternary structure, homopentamer. Can also form heteropentamers with CHRNB2, mainly found in basal forebrain cholinergic neurons. Interacts with RIC3; which is required for proper folding and assembly. Interacts with LYPD6. Interacts with CANX. In terms of processing, glycosylations at Asn-46, Asn-90 and Asn-133 are essential for TMEM35A/NACHO-mediated proper subunit assembly and trafficking to the cell membrane. Expressed in neurons. Expressed in umbrella cells of urothelium (at protein level).

Its subcellular location is the postsynaptic cell membrane. It is found in the cell membrane. The catalysed reaction is Ca(2+)(in) = Ca(2+)(out). It catalyses the reaction K(+)(in) = K(+)(out). The enzyme catalyses Na(+)(in) = Na(+)(out). It carries out the reaction choline(out) = choline(in). The catalysed reaction is NH4(+)(in) = NH4(+)(out). It catalyses the reaction L-arginine(in) = L-arginine(out). The enzyme catalyses guanidine(out) = guanidine(in). Its activity is regulated as follows. Activated by a myriad of ligands such as acetylcholine, cytisine, nicotine, choline and epibatidine. Oligomeric amyloid-beta protein 42 activates specifially CHRNA7:CHRNB2 nAchRs. Activity is modulated by positive allosteric modulators (PAMs), such as flavonoids, with a wide range of chemical diversity, pharmacological sensitivity and efficacy. AChR activity is inhibited by the antagonists alpha-conotoxons RgIA, ImI and ImII, small disulfide-constrained peptides from cone snails. Alpha-conotoxin PnIC selectively inhibits CHRNA7:CHRNB2 over CHRNA7 homopentamer. In terms of biological role, component of neuronal acetylcholine receptors (nAChRs) that function as pentameric, ligand-gated cation channels with high calcium permeability among other activities. nAChRs are excitatory neurotrasnmitter receptors formed by a collection of nAChR subunits known to mediate synaptic transmission in the nervous system and the neuromuscular junction. Each nAchR subunit confers differential attributes to channel properties, including activation, deactivation and desensitization kinetics, pH sensitivity, cation permeability, and binding to allosteric modulators. CHRNA7 forms homopentameric neuronal acetylcholine receptors abundantly expressed in the central nervous system, characterized by fast desensitization and high calcium permeability. Also forms heteropentamers with CHRNB2, mainly expressed in basal forebrain cholinergic neurons. Involved in the modulation of calcium-dependent signaling pathways and influences the release of neurotransmitters, including dopamine, glutamate and GABA. Also expressed in non-neuronal cells such as immune cells like lymphocytes, monocytes and macrophages. In T cells, activation induces metabotropic signaling that results in an increase of intracellular Ca2+ concentrations, independent of ionotropic receptor functions. In macrophages, required for acetylcholine-mediated inhibition of TNF and other inflammatory cytokine release. Once activated by acetylcholine, nicotine or other agonists, selectively inhibits production of pro-inflammatory cytokines while leaving anti-inflammatory cytokines undisturbed. Stimulates the cholinergic anti-inflammatory pathway, controlling inflammation by inhibiting NFKB nuclear translocation and activating the JAK2-STAT3 pathway, independently of ion channel activity. Also expressed in the urothelium where it modulates reflex bladder activity by increasing intracellular calcium through internal stores and decreasing basal ATP release. The protein is Neuronal acetylcholine receptor subunit alpha-7 (Chrna7) of Rattus norvegicus (Rat).